Reading from the N-terminus, the 115-residue chain is U31-theraphotoxin-Cg1b (115 aa).

Residues 1-18 (MKLCVIIIASLMVASVSG) form the signal peptide. Residues 19–51 (RLRKIKGTELDKKMLLEKLGHGMDIRFEETPRE) constitute a propeptide that is removed on maturation. 4 disulfides stabilise this stretch: Cys-52-Cys-67, Cys-60-Cys-73, Cys-64-Cys-113, and Cys-66-Cys-86.

Belongs to the neurotoxin 03 (Tx2) family. 02 subfamily. In terms of tissue distribution, expressed by the venom gland.

Its subcellular location is the secreted. Probable ion channel inhibitor. The chain is U31-theraphotoxin-Cg1b from Chilobrachys guangxiensis (Chinese earth tiger tarantula).